The sequence spans 2364 residues: Cytotoxin-L (2364 aa).

The segment at 1–91 is four-helical bundle; the sequence is MSLVNKAQLQ…EVLELKNNSL (91 aa). One can recognise a GT44 domain in the interval 96 to 468; it reads KNLHFIWIGG…APDVRSTINL (373 aa). The glucosyltransferase region stretch occupies residues 96–468; it reads KNLHFIWIGG…APDVRSTINL (373 aa). Residues 101 to 103, asparagine 139, 265 to 270, and 286 to 288 contribute to the UDP-alpha-D-glucose site; these read IWI, LAAASD, and DVD. Mg(2+)-binding residues include aspartate 288, glutamate 515, and serine 518. 518-520 contacts UDP-alpha-D-glucose; it reads SLW. An autoprocessing region region spans residues 544-799; the sequence is GEDDILDFSQ…KSKNLHELST (256 aa). Zn(2+)-binding residues include glutamate 545 and aspartate 546. One can recognise a Peptidase C80 domain in the interval 567–774; sequence SSSMRTPNKE…EESIIKDISS (208 aa). Tyrosine 577, lysine 600, and lysine 647 together coordinate 1D-myo-inositol hexakisphosphate. Zn(2+) is bound at residue histidine 653. Histidine 653 functions as the For protease activity in the catalytic mechanism. The active-site Nucleophile; for protease activity is cysteine 698. Histidine 757 is a Zn(2+) binding site. The 1D-myo-inositol hexakisphosphate site is built by lysine 764, lysine 775, and lysine 792. The tract at residues 800–1500 is translocation region; the sequence is LLQEIKNNSN…ESIIRNIYMP (701 aa). Interaction with host SEMA6A and SEMA6B regions lie at residues 1433 to 1438, 1466 to 1471, 1484 to 1495, 1504 to 1511, and 1596 to 1601; these read CIKLIE, DNETKY, FTAEFSNESIIR, NLFIYSSK, and YNNLDP. Cell wall-binding repeat units lie at residues 1833-1852, 1854-1873, 1876-1895, 1926-1945, 1946-1965, 1967-1986, 1987-2006, 2007-2026, 2057-2076, 2077-2097, 2099-2118, 2119-2138, 2139-2158, 2209-2224, 2227-2249, 2250-2269, 2270-2289, 2320-2339, and 2340-2359; these read VSGLIYINDSLYYFKPPKNN, ITGFTTIDDNKYYFDPTKSG, SIGEITIDGKDYYFNKQGIL, FIGKLNIDGKIYYFEDNYRA, AVEWKSLDGETYYFNPKTGE, LKGLHQIGDNKYYFDNNGIM, QTGFITINDKVFYFNNDGVM, QVGYIEVNGKYFYFGKNGER, YNGILNFNGKIYFFDISNTA, VVGWGILDDGSTYYFDDNTAE, CIGLTVINDCKYYFDDNGIR, QLGFITINDNIFYFSESGKI, ELGYQNINGNYFYIDESGLV, ETGWIENETDKYYFDP, KKAYKGINVVDDIKYYFDENGIM, KTGLISFENNNYYFNEDGKM, QFGYLNIKDKMFYFGKDGKM, YTGWLDLDGKRYYFTDEYIA, and ATSSLTIDGYNYYFDPDTAE. The segment at 1835 to 2364 is receptor-binding (CROPS) region; it reads GLIYINDSLY…PDTAELVVSE (530 aa).

It belongs to the clostridial glucosylating toxin (LCGT) family. In terms of assembly, homomultimer; forms an inactive homomultimer at pH 8, which dissociates at pH 4, leading to cytotoxicity. Interacts with host SEMA6A; interaction promotes toxin entry into host cell. Interacts with host SEMA6B; interaction promotes toxin entry into host cell. It depends on Zn(2+) as a cofactor. Mn(2+) is required as a cofactor. Mg(2+) serves as cofactor. Post-translationally, undergoes autocatalytic cleavage to release the N-terminal part (Glucosyltransferase TcsL), which constitutes the active part of the toxin, in the host cytosol. 1D-myo-inositol hexakisphosphate-binding (InsP6) activates the peptidase C80 domain and promotes autoprocessing.

The protein resides in the secreted. It is found in the host endosome membrane. The protein localises to the host cytoplasm. Its subcellular location is the host cytosol. It localises to the host cell membrane. It catalyses the reaction L-threonyl-[protein] + UDP-alpha-D-glucose = 3-O-(alpha-D-glucosyl)-L-threonyl-[protein] + UDP + H(+). With respect to regulation, protease activity is activated upon binding to 1D-myo-inositol hexakisphosphate (InsP6), which induces conformational reorganization. In terms of biological role, precursor of a cytotoxin that targets the vascular endothelium, inducing an anti-inflammatory effect and resulting in lethal toxic shock syndrome. TcsL constitutes the main toxin that mediates the pathology of P.sordellii infection, an anaerobic Gram-positive bacterium found in soil and in the gastrointestinal and vaginal tracts of animals and humans; although the majority of carriers are asymptomatic, pathogenic P.sordellii infections arise rapidly and are highly lethal. This form constitutes the precursor of the toxin: it enters into host cells and mediates autoprocessing to release the active toxin (Glucosyltransferase TcsL) into the host cytosol. Targets vascular endothelium by binding to the semaphorin proteins SEMA6A and SEMA6B, and enters host cells via clathrin-mediated endocytosis. Once entered into host cells, acidification in the endosome promotes the membrane insertion of the translocation region and formation of a pore, leading to translocation of the GT44 and peptidase C80 domains across the endosomal membrane. This activates the peptidase C80 domain and autocatalytic processing, releasing the N-terminal part (Glucosyltransferase TcsL), which constitutes the active part of the toxin, in the cytosol. Active form of the toxin, which is released into the host cytosol following autoprocessing and inactivates small GTPases. Acts by mediating monoglucosylation of small GTPases of the Ras (H-Ras/HRAS, K-Ras/KRAS and N-Ras/NRAS) family in host cells at the conserved threonine residue located in the switch I region ('Thr-37/35'), using UDP-alpha-D-glucose as the sugar donor. Does not catalyze monoglucosylation of Ral/RALA. Also able to catalyze monoglucosylation of some members of the Rho family (Rac1 and Rap2A), but with less efficiency than with Ras proteins. Monoglucosylation of host small GTPases completely prevents the recognition of the downstream effector, blocking the GTPases in their inactive form and leading to apoptosis. Induces an anti-inflammatory effect, mainly by inactivating Ras proteins which results in blockage of the cell cycle and killing of immune cells. The absence or moderate local inflammatory response allows C.sordellii spreading in deep tissues, production of toxin which is released in the general circulation and causes a toxic shock syndrome. The sequence is that of Cytotoxin-L from Paraclostridium sordellii (Clostridium sordellii).